Reading from the N-terminus, the 463-residue chain is MSRGYSLHLVLFLVLSTAFPSQARLSRYRRSAADAVSTDIDGIIGQLNDLGTDTKRLKEALQGVQEAVKKEPATTIAKVSTIVGSVGGSLSKFKSGDPFDVASGCLDIIASVATTFGGPYGIAIGAVASLISSILSLFSGNSMGSAIKQVIDDAFKKYRDQELEDNVKGAKRTFNAVITFVNSVSKTENLTEVHLDSVRDAVRVDAFTNMLGVLESRINRGSVSTDNNEAMRTINFIFLYLQLSVMRETLLTQVILLYKRAGGAYDELALSLSLTSDQNKEATRETVTFLHQMETKYSLCGSYYYPIDHSKAAIGILKLTKFFGVPDPARYTFDGLYYRMQNRAWNRYSICKESYAGNHMFRGCKDSSYHGIRIKKLENGYHTITLRSKAMYVTKHAQGWGWGTADEDPGEQGYFTFIPLTNGFYMVSTKKWPDYFVYMESSAHGYIRSWHYNPDPQGQWKIL.

The signal sequence occupies residues 1-18 (MSRGYSLHLVLFLVLSTA).

This sequence belongs to the jellyfish toxin family. Type II subfamily. In terms of assembly, oligomer. In terms of processing, contains disulfide bonds. It is suggested that CaTX-B is synthesized in the tentacle, is modified (become CaTX-A) and then migrates to the nematocyst.

Its subcellular location is the secreted. It is found in the nematocyst. It localises to the target cell membrane. Has potent hemolytic activity. Is lethal to crayfish. Causes cutaneous inflammation in humans. May act as a pore-forming toxin, disrupting normal transmembrane ion concentration gradients in susceptible cells. The sequence is that of Toxin CaTX-A from Carybdea alata (Hawaiian box jellyfish).